The following is a 448-amino-acid chain: Probable glycine dehydrogenase (decarboxylating) subunit 1 (448 aa).

It belongs to the GcvP family. N-terminal subunit subfamily. As to quaternary structure, the glycine cleavage system is composed of four proteins: P, T, L and H. In this organism, the P 'protein' is a heterodimer of two subunits.

It carries out the reaction N(6)-[(R)-lipoyl]-L-lysyl-[glycine-cleavage complex H protein] + glycine + H(+) = N(6)-[(R)-S(8)-aminomethyldihydrolipoyl]-L-lysyl-[glycine-cleavage complex H protein] + CO2. Its function is as follows. The glycine cleavage system catalyzes the degradation of glycine. The P protein binds the alpha-amino group of glycine through its pyridoxal phosphate cofactor; CO(2) is released and the remaining methylamine moiety is then transferred to the lipoamide cofactor of the H protein. The protein is Probable glycine dehydrogenase (decarboxylating) subunit 1 of Caulobacter vibrioides (strain ATCC 19089 / CIP 103742 / CB 15) (Caulobacter crescentus).